Here is a 901-residue protein sequence, read N- to C-terminus: ABC transporter A family member 8 (901 aa).

7 helical membrane passes run 34–54 (LITI…LFDT), 315–335 (IASL…FPVI), 369–389 (FLLI…LIGL), 402–422 (VFFF…SAMF), 427–447 (TATV…IFLF), 460–477 (WIIA…RGLY), and 508–528 (CIML…DQII). Residues 586-823 (VLCNNLKKVY…YGGSYVLTVT (238 aa)) enclose the ABC transporter domain. 624–631 (GPNGAGKT) lines the ATP pocket.

This sequence belongs to the ABC transporter superfamily. ABCA family. CPR flippase (TC 3.A.1.211) subfamily.

Its subcellular location is the membrane. The protein is ABC transporter A family member 8 (ABCA8) of Arabidopsis thaliana (Mouse-ear cress).